Reading from the N-terminus, the 164-residue chain is Putative histone H2B type 2-D (164 aa).

Positions 1–12 are enriched in low complexity; sequence MPEPAKFAPAPK. Residues 1 to 33 are disordered; the sequence is MPEPAKFAPAPKKGSKKAVTKAQKKDGKKRKRS. Pro2 is subject to N-acetylproline. An N6-(2-hydroxyisobutyryl)lysine; alternate modification is found at Lys6. N6-(beta-hydroxybutyryl)lysine; alternate is present on residues Lys6 and Lys12. Lys6, Lys12, and Lys13 each carry N6-acetyllysine; alternate. Lys6 is modified (N6-butyryllysine; alternate). Residues Lys6, Lys12, and Lys13 each carry the N6-crotonyllysine; alternate modification. N6-lactoyllysine; alternate is present on residues Lys6 and Lys12. Residue Lys6 forms a Glycyl lysine isopeptide (Lys-Gly) (interchain with G-Cter in SUMO2); alternate linkage. Lys13 carries the N6-(2-hydroxyisobutyryl)lysine; alternate modification. Ser15 is subject to Phosphoserine; by STK4/MST1. Residues Lys16, Lys17, Lys21, and Lys24 each carry the N6-acetyllysine; alternate modification. N6-crotonyllysine; alternate occurs at positions 16, 17, 21, and 24. 4 positions are modified to N6-lactoyllysine; alternate: Lys16, Lys17, Lys21, and Lys24. An N6-(beta-hydroxybutyryl)lysine; alternate mark is found at Lys17 and Lys21. Position 17 is an N6-glutaryllysine; alternate (Lys17). Lys21 and Lys24 each carry N6-(2-hydroxyisobutyryl)lysine; alternate. An N6-butyryllysine; alternate modification is found at Lys21. A Glycyl lysine isopeptide (Lys-Gly) (interchain with G-Cter in SUMO2); alternate cross-link involves residue Lys21. Position 25 is an N6-(2-hydroxyisobutyryl)lysine (Lys25). An N6-(2-hydroxyisobutyryl)lysine; alternate modification is found at Lys35. N6-(beta-hydroxybutyryl)lysine; alternate is present on Lys35. Residue Lys35 is modified to N6-crotonyllysine; alternate. N6-glutaryllysine; alternate is present on Lys35. Lys35 bears the N6-succinyllysine; alternate mark. Lys35 is covalently cross-linked (Glycyl lysine isopeptide (Lys-Gly) (interchain with G-Cter in ubiquitin); alternate). Ser37 bears the Phosphoserine; by AMPK mark. N6-(2-hydroxyisobutyryl)lysine; alternate is present on residues Lys44, Lys47, and Lys58. An N6-lactoyllysine; alternate modification is found at Lys44. An N6-glutaryllysine; alternate mark is found at Lys44 and Lys47. Lys47 is subject to N6-methyllysine; alternate. At Lys58 the chain carries N6,N6-dimethyllysine; alternate. Arg80 carries the post-translational modification Dimethylated arginine. The residue at position 86 (Lys86) is an N6-(2-hydroxyisobutyryl)lysine; alternate. Lys86 is modified (N6-(beta-hydroxybutyryl)lysine; alternate). Lys86 carries the N6-acetyllysine; alternate modification. Lys86 is modified (N6-lactoyllysine; alternate). Position 86 is an N6,N6,N6-trimethyllysine; alternate (Lys86). Omega-N-methylarginine occurs at positions 87 and 93. Residues 111-140 form a disordered region; the sequence is PCPRAPRRSPSTPAPSESLPGPGARSLPPS.

This sequence belongs to the histone H2B family. As to quaternary structure, the nucleosome is a histone octamer containing two molecules each of H2A, H2B, H3 and H4 assembled in one H3-H4 heterotetramer and two H2A-H2B heterodimers. The octamer wraps approximately 147 bp of DNA. Post-translationally, phosphorylation at Ser-37 (H2BS36ph) by AMPK in response to stress promotes transcription. Phosphorylated on Ser-15 (H2BS14ph) by STK4/MST1 during apoptosis; which facilitates apoptotic chromatin condensation. Also phosphorylated on Ser-15 in response to DNA double strand breaks (DSBs), and in correlation with somatic hypermutation and immunoglobulin class-switch recombination. In terms of processing, crotonylation (Kcr) is specifically present in male germ cells and marks testis-specific genes in post-meiotic cells, including X-linked genes that escape sex chromosome inactivation in haploid cells. Crotonylation marks active promoters and enhancers and confers resistance to transcriptional repressors. It is also associated with post-meiotically activated genes on autosomes. Lactylated in macrophages by EP300/P300 by using lactoyl-CoA directly derived from endogenous or exogenous lactate, leading to stimulates gene transcription.

The protein localises to the nucleus. It localises to the chromosome. Its function is as follows. Core component of nucleosome. Nucleosomes wrap and compact DNA into chromatin, limiting DNA accessibility to the cellular machineries which require DNA as a template. Histones thereby play a central role in transcription regulation, DNA repair, DNA replication and chromosomal stability. DNA accessibility is regulated via a complex set of post-translational modifications of histones, also called histone code, and nucleosome remodeling. The polypeptide is Putative histone H2B type 2-D (Homo sapiens (Human)).